A 425-amino-acid chain; its full sequence is Transmembrane protein 184A (425 aa).

7 consecutive transmembrane segments (helical) span residues 51-71, 96-116, 133-153, 189-209, 226-246, 261-281, and 303-323; these read LFLT…TALL, LLFI…LLGG, FVIY…SAIM, TLQF…LQAF, VTLV…LFYF, FLTI…LAIL, and LAAG…SLAL. The segment at 375–425 is disordered; the sequence is QYTQQSTHEAPGPGQGGHPSPSTHPGPASGSGGGKKSRNIEKRMLIPSEDL. Residues 392–402 show a composition bias toward low complexity; it reads HPSPSTHPGPA.

The protein belongs to the TMEM184 family. In terms of tissue distribution, expressed in vascular cells (at protein level).

It is found in the cell membrane. The protein localises to the cytoplasm. It localises to the perinuclear region. The protein resides in the early endosome membrane. Its subcellular location is the endosome. It is found in the cytoplasmic vesicle. The protein localises to the secretory vesicle membrane. It localises to the cytoplasmic vesicle membrane. In terms of biological role, acts as a heparin receptor in vascular cells. May be involved in vesicle transport in exocrine cells and Sertoli cells. The chain is Transmembrane protein 184A (Tmem184a) from Rattus norvegicus (Rat).